Reading from the N-terminus, the 356-residue chain is Manganese-dependent ADP-ribose/CDP-alcohol diphosphatase (356 aa).

The Zn(2+) site is built by aspartate 32, glutamine 34, aspartate 81, asparagine 117, histidine 253, histidine 290, and histidine 292.

It belongs to the ADPRibase-Mn family. In terms of assembly, monomer. Requires Mg(2+) as cofactor.

It catalyses the reaction CDP-choline + H2O = phosphocholine + CMP + 2 H(+). The enzyme catalyses ADP-D-ribose + H2O = D-ribose 5-phosphate + AMP + 2 H(+). The catalysed reaction is CDP-glycerol + H2O = sn-glycerol 3-phosphate + CMP + 2 H(+). Hydrolyzes ADP-ribose, IDP-ribose, CDP-glycerol, CDP-choline and CDP-ethanolamine, but not other non-reducing ADP-sugars or CDP-glucose. This is Manganese-dependent ADP-ribose/CDP-alcohol diphosphatase (adprm) from Xenopus laevis (African clawed frog).